The following is a 254-amino-acid chain: Protein Thf1 (254 aa).

Residues 183–217 (SDKLQKDLDLYRSNLEKMEQARITMEEAIQADRRK) adopt a coiled-coil conformation. Residues 213–227 (ADRRKREQREQEKLA) show a composition bias toward basic and acidic residues. A disordered region spans residues 213–254 (ADRRKREQREQEKLAKAAAAEAPAALEASSDNPEPETSETPS). Positions 228 to 240 (KAAAAEAPAALEA) are enriched in low complexity. A compositionally biased stretch (acidic residues) spans 245-254 (PEPETSETPS).

Belongs to the THF1 family.

In terms of biological role, may be involved in photosynthetic membrane biogenesis. The polypeptide is Protein Thf1 (Synechococcus elongatus (strain ATCC 33912 / PCC 7942 / FACHB-805) (Anacystis nidulans R2)).